The sequence spans 334 residues: Homoserine O-acetyltransferase (334 aa).

An AB hydrolase-1 domain is found at 61-318 (LVLHALTGDS…GSIHGHDAFL (258 aa)). Ser148 functions as the Nucleophile in the catalytic mechanism. Arg205 is a substrate binding site. Residues Asp285 and His314 contribute to the active site. Asp315 is a substrate binding site.

Belongs to the AB hydrolase superfamily. MetX family. Homodimer.

It localises to the cytoplasm. It carries out the reaction L-homoserine + acetyl-CoA = O-acetyl-L-homoserine + CoA. It participates in amino-acid biosynthesis; L-methionine biosynthesis via de novo pathway; O-acetyl-L-homoserine from L-homoserine: step 1/1. Transfers an acetyl group from acetyl-CoA to L-homoserine, forming acetyl-L-homoserine. This is Homoserine O-acetyltransferase from Deinococcus radiodurans (strain ATCC 13939 / DSM 20539 / JCM 16871 / CCUG 27074 / LMG 4051 / NBRC 15346 / NCIMB 9279 / VKM B-1422 / R1).